The chain runs to 194 residues: Holliday junction branch migration complex subunit RuvA (194 aa).

A domain I region spans residues 1 to 61 (MIASLSGLLE…EDSVSLYGFA (61 aa)). Residues 62 to 136 (SVLECTVFEQ…GKLTSVPLEN (75 aa)) form a domain II region. The segment at 136–140 (NRKQE) is flexible linker. Positions 141–194 (QAVDRSAEIVQALIGLGWQRQESAAAVESVLEKDQSLTMPEILRNALRYLAKQE) are domain III.

This sequence belongs to the RuvA family. In terms of assembly, homotetramer. Forms an RuvA(8)-RuvB(12)-Holliday junction (HJ) complex. HJ DNA is sandwiched between 2 RuvA tetramers; dsDNA enters through RuvA and exits via RuvB. An RuvB hexamer assembles on each DNA strand where it exits the tetramer. Each RuvB hexamer is contacted by two RuvA subunits (via domain III) on 2 adjacent RuvB subunits; this complex drives branch migration. In the full resolvosome a probable DNA-RuvA(4)-RuvB(12)-RuvC(2) complex forms which resolves the HJ.

The protein localises to the cytoplasm. Functionally, the RuvA-RuvB-RuvC complex processes Holliday junction (HJ) DNA during genetic recombination and DNA repair, while the RuvA-RuvB complex plays an important role in the rescue of blocked DNA replication forks via replication fork reversal (RFR). RuvA specifically binds to HJ cruciform DNA, conferring on it an open structure. The RuvB hexamer acts as an ATP-dependent pump, pulling dsDNA into and through the RuvAB complex. HJ branch migration allows RuvC to scan DNA until it finds its consensus sequence, where it cleaves and resolves the cruciform DNA. This chain is Holliday junction branch migration complex subunit RuvA, found in Tropheryma whipplei (strain Twist) (Whipple's bacillus).